We begin with the raw amino-acid sequence, 542 residues long: Glucose-6-phosphate isomerase 2 (542 aa).

E353 acts as the Proton donor in catalysis. Residues H384 and K505 contribute to the active site.

This sequence belongs to the GPI family.

It is found in the cytoplasm. The catalysed reaction is alpha-D-glucose 6-phosphate = beta-D-fructose 6-phosphate. It functions in the pathway carbohydrate biosynthesis; gluconeogenesis. Its pathway is carbohydrate degradation; glycolysis; D-glyceraldehyde 3-phosphate and glycerone phosphate from D-glucose: step 2/4. Catalyzes the reversible isomerization of glucose-6-phosphate to fructose-6-phosphate. In Cupriavidus pinatubonensis (strain JMP 134 / LMG 1197) (Cupriavidus necator (strain JMP 134)), this protein is Glucose-6-phosphate isomerase 2.